Consider the following 700-residue polypeptide: Receptor-type tyrosine-protein phosphatase epsilon (700 aa).

The N-terminal stretch at 1–19 (MEPLCPLLLVGFSLPLARA) is a signal peptide. At 20–46 (LRGNETTADSNETTTTSGPPDPGASQP) the chain is on the extracellular side. N-linked (GlcNAc...) asparagine glycosylation is found at Asn23 and Asn30. A helical transmembrane segment spans residues 47-69 (LLAWLLLPLLLLLLVLLLAAYFF). The Cytoplasmic portion of the chain corresponds to 70–700 (RFRKQRKAVV…DIFSDYANFK (631 aa)). Tyrosine-protein phosphatase domains lie at 135-394 (FREE…LLEY) and 426-689 (LEEE…VQDF). Residues Asp303, 335–341 (CSAGVGR), and Gln379 contribute to the substrate site. Residue Cys335 is the Phosphocysteine intermediate of the active site. The active-site Phosphocysteine intermediate is Cys630. A Phosphotyrosine modification is found at Tyr696.

Belongs to the protein-tyrosine phosphatase family. Receptor class 4 subfamily. In terms of assembly, monomer. Isoform 2: Homodimer. Can form oligomers. Dimerization is increased by oxidative stress and decreased by EGFR. Isoform 2 interacts with GRB2. A catalytically active cytoplasmic form (p65) is produced by proteolytic cleavage of either isoform 1, isoform 2 or isoform 3. In terms of processing, isoform 1 and isoform 2 are phosphorylated on tyrosine residues by tyrosine kinase Neu. Post-translationally, isoform 1 is glycosylated. In terms of tissue distribution, expressed in giant cell tumor (osteoclastoma rich in multinucleated osteoclastic cells).

The protein localises to the cell membrane. The protein resides in the cytoplasm. It carries out the reaction O-phospho-L-tyrosyl-[protein] + H2O = L-tyrosyl-[protein] + phosphate. In terms of biological role, isoform 1 plays a critical role in signaling transduction pathways and phosphoprotein network topology in red blood cells. May play a role in osteoclast formation and function. Isoform 2 acts as a negative regulator of insulin receptor (IR) signaling in skeletal muscle. Regulates insulin-induced tyrosine phosphorylation of insulin receptor (IR) and insulin receptor substrate 1 (IRS-1), phosphorylation of protein kinase B and glycogen synthase kinase-3 and insulin induced stimulation of glucose uptake. Functionally, isoform 1 and isoform 2 act as a negative regulator of FceRI-mediated signal transduction leading to cytokine production and degranulation, most likely by acting at the level of SYK to affect downstream events such as phosphorylation of SLP76 and LAT and mobilization of Ca(2+). The polypeptide is Receptor-type tyrosine-protein phosphatase epsilon (PTPRE) (Homo sapiens (Human)).